A 550-amino-acid chain; its full sequence is Glucose-6-phosphate isomerase (550 aa).

The Proton donor role is filled by Glu-356. Active-site residues include His-387 and Lys-515.

This sequence belongs to the GPI family.

It localises to the cytoplasm. The enzyme catalyses alpha-D-glucose 6-phosphate = beta-D-fructose 6-phosphate. The protein operates within carbohydrate biosynthesis; gluconeogenesis. It participates in carbohydrate degradation; glycolysis; D-glyceraldehyde 3-phosphate and glycerone phosphate from D-glucose: step 2/4. In terms of biological role, catalyzes the reversible isomerization of glucose-6-phosphate to fructose-6-phosphate. This is Glucose-6-phosphate isomerase from Vibrio cholerae serotype O1 (strain ATCC 39315 / El Tor Inaba N16961).